We begin with the raw amino-acid sequence, 189 residues long: Probable UbiX-like flavin prenyltransferase (189 aa).

Residues 9–11 (GAS), S36, 87–90 (SMKT), and R122 each bind FMN.

The protein belongs to the UbiX/PAD1 family. YclB subfamily. Homododecamer.

It catalyses the reaction dimethylallyl phosphate + FMNH2 = prenylated FMNH2 + phosphate. Functionally, involved in the non-oxidative decarboxylation and detoxification of phenolic derivatives under anaerobic conditions. Flavin prenyltransferase that catalyzes the synthesis of the prenylated FMN cofactor (prenyl-FMN) for phenolic acid decarboxylase. In Sedimentibacter hydroxybenzoicus (Clostridium hydroxybenzoicum), this protein is Probable UbiX-like flavin prenyltransferase.